We begin with the raw amino-acid sequence, 505 residues long: Lysine--tRNA ligase (505 aa).

The Mg(2+) site is built by glutamate 415 and glutamate 422.

This sequence belongs to the class-II aminoacyl-tRNA synthetase family. Homodimer. Requires Mg(2+) as cofactor.

The protein resides in the cytoplasm. It catalyses the reaction tRNA(Lys) + L-lysine + ATP = L-lysyl-tRNA(Lys) + AMP + diphosphate. The sequence is that of Lysine--tRNA ligase from Pectobacterium atrosepticum (strain SCRI 1043 / ATCC BAA-672) (Erwinia carotovora subsp. atroseptica).